The sequence spans 434 residues: ATP-dependent RNA helicase uap56 (434 aa).

The segment at 1–43 (MASAQEDLIDYEEEEELVQDQPAQEITPAADTAENGEKSDKKG) is disordered. Residues 7–18 (DLIDYEEEEELV) show a composition bias toward acidic residues. Positions 51 to 79 (TGFRDFLLKPELLRAITDSGFEHPSEVQQ) match the Q motif motif. A Helicase ATP-binding domain is found at 82–257 (IPQSILGTDV…KKFMQNPLEI (176 aa)). 95–102 (AKSGMGKT) is an ATP binding site. Positions 204 to 207 (DECD) match the DECD box motif. Positions 269 to 430 (GLQQHYVKLE…ELPDEIDVGS (162 aa)) constitute a Helicase C-terminal domain.

The protein belongs to the DEAD box helicase family. DECD subfamily. In terms of assembly, interacts with mlo3 and rae1.

It localises to the nucleus. It catalyses the reaction ATP + H2O = ADP + phosphate + H(+). In terms of biological role, ATP-binding RNA helicase involved in transcription elongation and required for the export of mRNA out of the nucleus. SUB2 also plays a role in pre-mRNA splicing and spliceosome assembly. May be involved in rDNA and telomeric silencing, and maintenance of genome integrity. Links the mRNA adapter mlo3 to rae1 for targeting mRNA-protein complex to the proteins of the nucleoporin complex (NPC). This is ATP-dependent RNA helicase uap56 (uap56) from Schizosaccharomyces pombe (strain 972 / ATCC 24843) (Fission yeast).